The following is a 299-amino-acid chain: DNA-binding transcriptional repressor CapW (299 aa).

Residues 1–15 (MPDNFREGDKQDSQK) show a composition bias toward basic and acidic residues. A disordered region spans residues 1-21 (MPDNFREGDKQDSQKGRQGAR). The segment at 1-95 (MPDNFREGDK…LFQPVYMTSS (95 aa)) is winged HTH domain. The tract at residues 96–207 (LECYLNDLLQ…LSRIVQAQNA (112 aa)) is WYL domain. Residues 131–211 (LRRLDTDVVS…VQAQNAGPDE (81 aa)) enclose the WYL domain. The interval 156–200 (YQSMSDPQGSKRTLTPHSLVHDGYRWHTRAWCHKRGEYRDFLLSR) is probable ligand-binding region. Residues 208 to 299 (GPDEERANGD…KDEIYALLKQ (92 aa)) are WCX domain.

As to quaternary structure, homodimer.

In terms of biological role, transcriptional regulator of a CBASS antivirus system. CBASS (cyclic oligonucleotide-based antiphage signaling system) provides immunity against bacteriophage. The CD-NTase protein synthesizes cyclic nucleotides in response to infection; these serve as specific second messenger signals. The signals activate a diverse range of effectors, leading to bacterial cell death and thus abortive phage infection. A type III CBASS system. Expression of this CBASS system (Cap18-Cap6-Cap7-CdnC-CapW-Cap17) in a susceptible E.coli (strain MG1655) confers resistance to bacteriophage P1. Binds specifically to and represses expression from the CBASS promoter, found between the genes for divergently transcribed capW and cdnC. This chain is DNA-binding transcriptional repressor CapW, found in Escherichia coli (strain KTE188).